The chain runs to 382 residues: Mannosyl phosphorylinositol ceramide synthase SUR1 (382 aa).

At 1 to 6 (MRKELK) the chain is on the cytoplasmic side. The helical transmembrane segment at 7–27 (YLICFNILLLLSIIYYTFDLL) threads the bilayer. Over 28 to 269 (TLCIDDTVKD…KALENHILSC (242 aa)) the chain is Extracellular. A helical transmembrane segment spans residues 270 to 290 (VVTGFIFGFFILYGEFTFYCW). At 291–382 (LCSKNFSNLT…SKYSLGNNSS (92 aa)) the chain is on the cytoplasmic side. Serine 349 carries the post-translational modification Phosphoserine.

Belongs to the glycosyltransferase 32 family. Heterodimer of SUR1 and CSG2.

It is found in the membrane. The catalysed reaction is a 1D-myo-inositol-1-phospho-N-[(R)-2-hydroxy-very-long-chain fatty acyl]-(R)-4-hydroxysphingoid base + GDP-alpha-D-mannose = an alpha-D-mannosyl-(1&lt;-&gt;6)-1D-myo-inositol-1-phospho-N-[(R)-2-hydroxy-very-long-chain fatty acyl]-(R)-4-hydroxysphingoid base + GDP + H(+). Functionally, involved in the synthesis of mannosyl phosphorylinositol ceramide. Catalyzes the addition of mannosyl to phosphorylinositol ceramide. Suppressor of RVS161 mutation. The polypeptide is Mannosyl phosphorylinositol ceramide synthase SUR1 (Saccharomyces cerevisiae (strain ATCC 204508 / S288c) (Baker's yeast)).